The primary structure comprises 144 residues: Superoxide dismutase [Mn], mitochondrial (144 aa).

Residues His10, His58, and Asp143 each coordinate Mn(2+).

The protein belongs to the iron/manganese superoxide dismutase family. As to quaternary structure, homotetramer. It depends on Mn(2+) as a cofactor.

Its subcellular location is the mitochondrion matrix. The enzyme catalyses 2 superoxide + 2 H(+) = H2O2 + O2. Functionally, destroys superoxide anion radicals which are normally produced within the cells and which are toxic to biological systems. The polypeptide is Superoxide dismutase [Mn], mitochondrial (Palinurus vulgaris (European spiny lobster)).